We begin with the raw amino-acid sequence, 366 residues long: Phospho-N-acetylmuramoyl-pentapeptide-transferase (366 aa).

10 helical membrane passes run 3–23 (QIII…PVLI), 52–72 (MGGI…GIVG), 80–100 (LTAS…LGFA), 120–140 (LIGQ…FPNA), 161–181 (LAIG…YILI), 197–217 (LAAG…FWQF), 238–258 (LAIL…WNAA), 262–282 (IFMG…LSVA), 287–307 (LLMI…VIQV), and 341–361 (FWLI…GEWL).

This sequence belongs to the glycosyltransferase 4 family. MraY subfamily. It depends on Mg(2+) as a cofactor.

The protein resides in the cell membrane. It catalyses the reaction UDP-N-acetyl-alpha-D-muramoyl-L-alanyl-gamma-D-glutamyl-meso-2,6-diaminopimeloyl-D-alanyl-D-alanine + di-trans,octa-cis-undecaprenyl phosphate = di-trans,octa-cis-undecaprenyl diphospho-N-acetyl-alpha-D-muramoyl-L-alanyl-D-glutamyl-meso-2,6-diaminopimeloyl-D-alanyl-D-alanine + UMP. The protein operates within cell wall biogenesis; peptidoglycan biosynthesis. Functionally, catalyzes the initial step of the lipid cycle reactions in the biosynthesis of the cell wall peptidoglycan: transfers peptidoglycan precursor phospho-MurNAc-pentapeptide from UDP-MurNAc-pentapeptide onto the lipid carrier undecaprenyl phosphate, yielding undecaprenyl-pyrophosphoryl-MurNAc-pentapeptide, known as lipid I. This chain is Phospho-N-acetylmuramoyl-pentapeptide-transferase, found in Corynebacterium diphtheriae (strain ATCC 700971 / NCTC 13129 / Biotype gravis).